Reading from the N-terminus, the 70-residue chain is Small ribosomal subunit protein bS21 (70 aa).

Belongs to the bacterial ribosomal protein bS21 family.

The chain is Small ribosomal subunit protein bS21 from Sulfurovum sp. (strain NBC37-1).